Consider the following 405-residue polypeptide: Arginine biosynthesis bifunctional protein ArgJ (405 aa).

Positions 152, 178, 189, 276, 400, and 405 each coordinate substrate. T189 (nucleophile) is an active-site residue.

The protein belongs to the ArgJ family. As to quaternary structure, heterotetramer of two alpha and two beta chains.

The protein localises to the cytoplasm. It carries out the reaction N(2)-acetyl-L-ornithine + L-glutamate = N-acetyl-L-glutamate + L-ornithine. The catalysed reaction is L-glutamate + acetyl-CoA = N-acetyl-L-glutamate + CoA + H(+). Its pathway is amino-acid biosynthesis; L-arginine biosynthesis; L-ornithine and N-acetyl-L-glutamate from L-glutamate and N(2)-acetyl-L-ornithine (cyclic): step 1/1. The protein operates within amino-acid biosynthesis; L-arginine biosynthesis; N(2)-acetyl-L-ornithine from L-glutamate: step 1/4. Its function is as follows. Catalyzes two activities which are involved in the cyclic version of arginine biosynthesis: the synthesis of N-acetylglutamate from glutamate and acetyl-CoA as the acetyl donor, and of ornithine by transacetylation between N(2)-acetylornithine and glutamate. The chain is Arginine biosynthesis bifunctional protein ArgJ from Pseudomonas savastanoi pv. phaseolicola (strain 1448A / Race 6) (Pseudomonas syringae pv. phaseolicola (strain 1448A / Race 6)).